Reading from the N-terminus, the 463-residue chain is Glucagon-like peptide 1 receptor (463 aa).

Residues 1–21 (MASTPSLLRLALLLLGAVGRA) form the signal peptide. The Extracellular segment spans residues 22 to 139 (GPRPQGTTVS…KRGERNFPEE (118 aa)). Disulfide bonds link Cys-46-Cys-71, Cys-62-Cys-104, and Cys-85-Cys-126. Residues Asn-63, Asn-82, and Asn-115 are each glycosylated (N-linked (GlcNAc...) asparagine). The helical transmembrane segment at 140–164 (QLLSLYIIYTVGYALSFSALVIASA) threads the bilayer. The Cytoplasmic segment spans residues 165-175 (ILVGFRHLHCT). A helical membrane pass occupies residues 176 to 201 (RNYIHLNLFASFILRALSVFIKDAAL). The Extracellular segment spans residues 202–227 (KWMYSTAAQQHQWDGLLSYQDSLGCR). Cysteines 226 and 296 form a disulfide. The helical transmembrane segment at 228–251 (LVFLLMQYCVAANYYWLLVEGVYL) threads the bilayer. Residues 252–265 (YTLLAFSVFSEQRI) are Cytoplasmic-facing. The chain crosses the membrane as a helical span at residues 266–290 (FKLYLSIGWGVPLLFVIPWGIVKYL). The Extracellular segment spans residues 291 to 305 (YEDEGCWTRNSNMNY). Residues 306-328 (WLIIRLPILFAIGVNFLIFIRVI) traverse the membrane as a helical segment. At 329–348 (CIVVSKLKANLMCKTDIKCR) the chain is on the cytoplasmic side. An ADP-ribosylcysteine modification is found at Cys-341. At Arg-348 the chain carries ADP-ribosylarginine. The helical transmembrane segment at 349–370 (LAKSTLTLIPLLGTHEVIFAFV) threads the bilayer. Residues 352 to 355 (STLT) form an important for allosteric inhibitor binding region. At 371–383 (MDEHARGTLRFIK) the chain is on the extracellular side. A helical transmembrane segment spans residues 384–404 (LFTELSFTSFQGLMVAILYCF). Residues 405-463 (VNNEVQMEFRKCWERWRLEHLNIQRDCSMKPLKCPTSSVSSGATVGSSVYAATCQSSYS) are Cytoplasmic-facing.

Belongs to the G-protein coupled receptor 2 family. As to quaternary structure, may form homodimers and heterodimers with GIPR. Post-translationally, N-glycosylation enhances cell surface expression and lengthens receptor half-life by preventing degradation in the ER. Detected in pancreatic islets (at protein level). Detected in pancreatic islets and lungs.

Its subcellular location is the cell membrane. In terms of biological role, G-protein coupled receptor for glucagon-like peptide 1 (GLP-1). Ligand binding triggers activation of a signaling cascade that leads to the activation of adenylyl cyclase and increased intracellular cAMP levels. Plays a role in regulating insulin secretion in response to GLP-1. The chain is Glucagon-like peptide 1 receptor (Glp1r) from Mus musculus (Mouse).